Consider the following 376-residue polypeptide: MESSRSLEHVLSMQGGEDDASYVKNCYGPAARLALSKPMLTTAINSIKLTEGCSSHLKIADLGCAIGDNTFSTVETVVEVLGKKLAVIDGGTEPEMEFEVFFSDLSSNDFNALFRSLDEKVNGSSRKYFAAGVPGSFYKRLFPKGELHVVVTMSALQWLSQVPEKVMEKGSKSWNKGGVWIEGAEKEVVEAYAEQADKDLVEFLKCRKEEIVVGGVLFMLMGGRPSGSVNQIGDPDSSLKHPFTTLMDQAWQDLVDEGLIEEEKRDGFNIPVYFRTTEEIAAAIDRCGGFKIEKTENLIIADHMNGKQEELMKDPDSYGRDRANYAQAGLKPIVQAYLGPDLTHKLFKRYAVRAAADKEILNNCFYHMIAVSAVRV.

S-adenosyl-L-homocysteine contacts are provided by Y22, C64, N69, D104, L105, S136, and F137. W158 contacts gibberellin A9. Residues N175, V179, R265, D266, F268, and N269 each coordinate Mg(2+).

The protein belongs to the methyltransferase superfamily. Type-7 methyltransferase family. SABATH subfamily. Mg(2+) is required as a cofactor. Expressed in siliques, developing seeds, anthers and germinating seeds. Not detected in leaves, stems, flowers and roots.

It carries out the reaction gibberellin A9 + S-adenosyl-L-methionine = O-methyl gibberellin A9 + S-adenosyl-L-homocysteine. Up-regulated by K(+) and NH(4+), down-regulated by Zn(2+), Cu(2+), Fe(2+) and Fe(3+). In terms of biological role, methylates the carboxyl group of several gibberellins (GAs). Substrate preference is GA9 &gt; GA20 &gt; GA3 &gt; GA4 &gt; GA34 &gt; GA51 &gt; GA1 &gt; GA19 &gt; GA12. No activity with diterpenes abietic acid and ent-kaurenoic acid. The chain is Gibberellic acid methyltransferase 1 (GAMT1) from Arabidopsis thaliana (Mouse-ear cress).